A 476-amino-acid polypeptide reads, in one-letter code: Bifunctional protein HldE (476 aa).

Residues 1-319 (MKLTLPDYDQ…EAIYGSQDSG (319 aa)) are ribokinase. 195 to 198 (NLSE) serves as a coordination point for ATP. The active site involves D264. The interval 344 to 476 (MTNGCFDILH…IIEAIRGGKG (133 aa)) is cytidylyltransferase.

It in the N-terminal section; belongs to the carbohydrate kinase PfkB family. In the C-terminal section; belongs to the cytidylyltransferase family. In terms of assembly, homodimer.

The catalysed reaction is D-glycero-beta-D-manno-heptose 7-phosphate + ATP = D-glycero-beta-D-manno-heptose 1,7-bisphosphate + ADP + H(+). It carries out the reaction D-glycero-beta-D-manno-heptose 1-phosphate + ATP + H(+) = ADP-D-glycero-beta-D-manno-heptose + diphosphate. It participates in nucleotide-sugar biosynthesis; ADP-L-glycero-beta-D-manno-heptose biosynthesis; ADP-L-glycero-beta-D-manno-heptose from D-glycero-beta-D-manno-heptose 7-phosphate: step 1/4. The protein operates within nucleotide-sugar biosynthesis; ADP-L-glycero-beta-D-manno-heptose biosynthesis; ADP-L-glycero-beta-D-manno-heptose from D-glycero-beta-D-manno-heptose 7-phosphate: step 3/4. In terms of biological role, catalyzes the phosphorylation of D-glycero-D-manno-heptose 7-phosphate at the C-1 position to selectively form D-glycero-beta-D-manno-heptose-1,7-bisphosphate. Functionally, catalyzes the ADP transfer from ATP to D-glycero-beta-D-manno-heptose 1-phosphate, yielding ADP-D-glycero-beta-D-manno-heptose. The sequence is that of Bifunctional protein HldE from Photobacterium profundum (strain SS9).